The following is a 993-amino-acid chain: Muscular LMNA-interacting protein (993 aa).

An interaction with LMNA region spans residues 1–51; that stretch reads MLSEQGLLSDCGNNYFQMTSCILSGSIQTTPQVSAGGSEAKPLIFTFVPTV. The disordered stretch occupies residues 71-90; it reads PEESSDKSPETVNRSKSNDY. The segment covering 80–90 has biased composition (polar residues); that stretch reads ETVNRSKSNDY. The residue at position 146 (serine 146) is a Phosphoserine. Disordered stretches follow at residues 152–171, 186–225, 231–250, 300–322, 334–358, 443–481, 500–582, 677–711, and 811–864; these read AASRKVEQGPPGGIGTAAVR, VRPKTQGTDLKTSSHPEMLHGMAPQQKHGQLTSSPTTSEQ, PAFSFVSPTNPNTPPDPVNL, PHSTQLSGSNLPSSTAADPKPGL, SHVLSHGESPRTSSSPPSSSASLKS, SPASSTLTLDQKEKQTPPTPKKSLSSCSLRAGSPDQGEL, TPLS…IHTY, SALHPHCGSGTLPSRLGKSESTTPNHRSPVSTPSL, and LSMH…SQLT. The required for interaction with ISL1 stretch occupies residues 161–837; it reads PPGGIGTAAV…GSDTVKTPTT (677 aa). Over residues 212 to 225 the composition is skewed to polar residues; it reads KHGQLTSSPTTSEQ. Over residues 300–315 the composition is skewed to polar residues; it reads PHSTQLSGSNLPSSTA. Residues 343–358 show a composition bias toward low complexity; it reads PRTSSSPPSSSASLKS. The segment covering 500-532 has biased composition (polar residues); that stretch reads TPLSQAPSLSPTKQASSSLASMNVERTPSPTLK. A compositionally biased stretch (low complexity) spans 533–563; the sequence is SNTMLSLLQTSTSSSVGLPPVPPSSSLSSLK. Residues 564–574 show a composition bias toward basic and acidic residues; the sequence is SKQDGDLRGPE. The segment covering 695-711 has biased composition (polar residues); the sequence is SESTTPNHRSPVSTPSL. A compositionally biased stretch (low complexity) spans 811–822; it reads LSMHSSDSPSRS. Serine 818 is modified (phosphoserine). Positions 849 to 864 are enriched in polar residues; sequence ANLSSPSSTVSESQLT.

Directly interacts with LMNA. Interacts with ISL1 (via N-terminal domain); the interaction represses ISL1 transactivator activity. Interactions of ISL1 with MLIP1 and GCN5/KAT2A may be mutually exclusive. In terms of tissue distribution, predominantly expressed in the heart and skeletal muscle. Also detected in liver. As to expression, expressed in skeletal muscle.

The protein localises to the nucleus. It localises to the nucleus envelope. Its subcellular location is the PML body. It is found in the cytoplasm. The protein resides in the cytosol. The protein localises to the cell membrane. It localises to the sarcolemma. Its function is as follows. Required for myoblast differentiation into myotubes, possibly acting as a transcriptional regulator of the myogenic program. Required for cardiac adaptation to stress through integrated regulation of the AKT/mTOR pathways and FOXO1. Regulates cardiac homeostasis and plays a role in the protection against cardiac hypertrophy. Binds chromatin. May act as a transcriptional cofactor for ISL1, repressing its transcriptional activity. May also repress MYOCD transcriptional activity. This Homo sapiens (Human) protein is Muscular LMNA-interacting protein.